The chain runs to 273 residues: Formamidopyrimidine-DNA glycosylase (273 aa).

The active-site Schiff-base intermediate with DNA is the P2. The active-site Proton donor is E3. The Proton donor; for beta-elimination activity role is filled by K58. H91 and R110 together coordinate DNA. An FPG-type zinc finger spans residues 238–272; it reads QVYGKTGQPCPRCASMIVKIKLGGRGTHLCPHCQK. R262 serves as the catalytic Proton donor; for delta-elimination activity.

The protein belongs to the FPG family. Monomer. It depends on Zn(2+) as a cofactor.

The enzyme catalyses Hydrolysis of DNA containing ring-opened 7-methylguanine residues, releasing 2,6-diamino-4-hydroxy-5-(N-methyl)formamidopyrimidine.. The catalysed reaction is 2'-deoxyribonucleotide-(2'-deoxyribose 5'-phosphate)-2'-deoxyribonucleotide-DNA = a 3'-end 2'-deoxyribonucleotide-(2,3-dehydro-2,3-deoxyribose 5'-phosphate)-DNA + a 5'-end 5'-phospho-2'-deoxyribonucleoside-DNA + H(+). Its function is as follows. Involved in base excision repair of DNA damaged by oxidation or by mutagenic agents. Acts as a DNA glycosylase that recognizes and removes damaged bases. Has a preference for oxidized purines, such as 7,8-dihydro-8-oxoguanine (8-oxoG). Has AP (apurinic/apyrimidinic) lyase activity and introduces nicks in the DNA strand. Cleaves the DNA backbone by beta-delta elimination to generate a single-strand break at the site of the removed base with both 3'- and 5'-phosphates. The protein is Formamidopyrimidine-DNA glycosylase of Streptococcus thermophilus (strain CNRZ 1066).